Reading from the N-terminus, the 153-residue chain is Protein-export protein SecB (153 aa).

This sequence belongs to the SecB family. As to quaternary structure, homotetramer, a dimer of dimers. One homotetramer interacts with 1 SecA dimer.

It localises to the cytoplasm. Its function is as follows. One of the proteins required for the normal export of preproteins out of the cell cytoplasm. It is a molecular chaperone that binds to a subset of precursor proteins, maintaining them in a translocation-competent state. It also specifically binds to its receptor SecA. The sequence is that of Protein-export protein SecB from Erwinia tasmaniensis (strain DSM 17950 / CFBP 7177 / CIP 109463 / NCPPB 4357 / Et1/99).